The primary structure comprises 564 residues: Dihydroxy-acid dehydratase 2 (564 aa).

[2Fe-2S] cluster is bound at residue C59. D91 provides a ligand contact to Mg(2+). A [2Fe-2S] cluster-binding site is contributed by C132. Mg(2+) is bound by residues D133 and K134. K134 is subject to N6-carboxylysine. C204 contacts [2Fe-2S] cluster. E454 is a binding site for Mg(2+). The Proton acceptor role is filled by S480.

The protein belongs to the IlvD/Edd family. In terms of assembly, homodimer. Requires [2Fe-2S] cluster as cofactor. The cofactor is Mg(2+).

The catalysed reaction is (2R)-2,3-dihydroxy-3-methylbutanoate = 3-methyl-2-oxobutanoate + H2O. It catalyses the reaction (2R,3R)-2,3-dihydroxy-3-methylpentanoate = (S)-3-methyl-2-oxopentanoate + H2O. Its pathway is amino-acid biosynthesis; L-isoleucine biosynthesis; L-isoleucine from 2-oxobutanoate: step 3/4. The protein operates within amino-acid biosynthesis; L-valine biosynthesis; L-valine from pyruvate: step 3/4. Functions in the biosynthesis of branched-chain amino acids. Catalyzes the dehydration of (2R,3R)-2,3-dihydroxy-3-methylpentanoate (2,3-dihydroxy-3-methylvalerate) into 2-oxo-3-methylpentanoate (2-oxo-3-methylvalerate) and of (2R)-2,3-dihydroxy-3-methylbutanoate (2,3-dihydroxyisovalerate) into 2-oxo-3-methylbutanoate (2-oxoisovalerate), the penultimate precursor to L-isoleucine and L-valine, respectively. This is Dihydroxy-acid dehydratase 2 from Staphylococcus saprophyticus subsp. saprophyticus (strain ATCC 15305 / DSM 20229 / NCIMB 8711 / NCTC 7292 / S-41).